The following is a 393-amino-acid chain: Elongation factor Tu (393 aa).

Positions 10 to 203 constitute a tr-type G domain; that stretch reads KPHVNIGTIG…AVDAFIPDPV (194 aa). Residues 19–26 are G1; it reads GHVDHGKT. 19 to 26 contacts GTP; it reads GHVDHGKT. Thr-26 is a binding site for Mg(2+). The segment at 60-64 is G2; that stretch reads GITIS. The interval 81–84 is G3; the sequence is DCPG. Residues 81 to 85 and 136 to 139 contribute to the GTP site; these read DCPGH and NKVD. A G4 region spans residues 136–139; the sequence is NKVD. The tract at residues 173–175 is G5; sequence SAL.

This sequence belongs to the TRAFAC class translation factor GTPase superfamily. Classic translation factor GTPase family. EF-Tu/EF-1A subfamily. As to quaternary structure, monomer.

The protein localises to the cytoplasm. The enzyme catalyses GTP + H2O = GDP + phosphate + H(+). Its function is as follows. GTP hydrolase that promotes the GTP-dependent binding of aminoacyl-tRNA to the A-site of ribosomes during protein biosynthesis. This is Elongation factor Tu from Chlorobium chlorochromatii (strain CaD3).